Consider the following 845-residue polypeptide: Synaptonemal complex protein 1 (845 aa).

Positions 59–215 (ETRQVYVDLN…YQLTEEKEAQ (157 aa)) are interaction with SYCE3. 2 coiled-coil regions span residues 64 to 211 (YVDL…LTEE) and 244 to 544 (LRTE…EIEV). Residues 550–644 (EKLLGEVEKA…VSLKKQLEIE (95 aa)) form a required for pH-induced assembly of C-terminal ends into antiparallel tetramers region. Positions 553 to 556 (LGEV) match the Nuclear localization signal motif. A coiled-coil region spans residues 620–663 (KTALETELSNIRNELVSLKKQLEIEREEKEKLKLEKENTAILKD). The DNA-binding stretch occupies residues 657–845 (NTAILKDKKD…RLKEAEKLFA (189 aa)). Serine 676 carries the phosphoserine modification. A compositionally biased stretch (polar residues) spans 684–703 (FDSKTTPSQNISRISSSMES). The tract at residues 684 to 709 (FDSKTTPSQNISRISSSMESGKTKDN) is disordered. The Nuclear localization signal motif lies at 753 to 756 (KKRK). The tract at residues 786-808 (LYNNNSPNSHLTPKQTPLSLSTP) is disordered.

Structural component of synaptonemal complexes. Homotetramer that consists of an N-terminal four-helical bundle that bifurcates into two elongated C-terminal dimeric coiled coils. This tetrameric building block potentially self-assembles into a supramolecular zipper-like lattice to mediate meiotic chromosome synapsis. Self-assembly is likely initiated by local proton density at chromosome axis, which is predicted to trigger antiparallel back to back assembly of adjacent C-terminal ends into tetrameric structures that anchor to chromosomal DNA. Then the N-terminal ends are predicted to undergo cooperative antiparallel head to head assembly at the midline of synaptonemal complexes central element to form a zipper-like lattice between properly aligned homologous chromosomes. The nascent synapsis generated by SYCP1 is stabilized through interaction with central element proteins SYCE1 and SYCE2. Interacts (via tetrameric core) with SYCE3; the interaction remodels SYCP1 homotetramers to 2:1 heterotrimers with SYCE3. SYCP1/SYCE3 heterotrimers form lattice assemblies as part of the mature synaptonemal complex via both lateral and head-to-head interactions. Forms a complex with EWSR1, PRDM9, SYCP3 and REC8; complex formation is dependent of phosphorylated form of REC8 and requires PRDM9 bound to hotspot DNA; EWSR1 joins PRDM9 with the chromosomal axis through REC8. Interacts with SPO16.

The protein localises to the nucleus. It localises to the chromosome. The protein resides in the centromere. Functionally, major component of the transverse filaments of synaptonemal complexes, formed between homologous chromosomes during meiotic prophase. Required for normal assembly of the central element of the synaptonemal complexes. Required for normal centromere pairing during meiosis. Required for normal meiotic chromosome synapsis during oocyte and spermatocyte development and for normal male and female fertility. This chain is Synaptonemal complex protein 1, found in Mesocricetus auratus (Golden hamster).